Here is a 161-residue protein sequence, read N- to C-terminus: Urocortin-3 (161 aa).

Residues 1 to 21 form the signal peptide; sequence MLMPVHFLLLLLLLLGGPRTG. Positions 22-118 are excised as a propeptide; the sequence is LPHKFYKAKP…QDTAKSPHRT (97 aa). The disordered stretch occupies residues 64–118; sequence SRDASSGEEEEGKEKKTFPISGARGGARGTRYRYVSQAQPRGKPRQDTAKSPHRT. Ile157 carries the isoleucine amide modification.

It belongs to the sauvagine/corticotropin-releasing factor/urotensin I family. As to quaternary structure, binds with high affinity to CRF receptors 2-alpha and 2-beta.

Its subcellular location is the secreted. Its function is as follows. Suppresses food intake, delays gastric emptying and decreases heat-induced edema. Might represent an endogenous ligand for maintaining homeostasis after stress. This is Urocortin-3 (UCN3) from Homo sapiens (Human).